We begin with the raw amino-acid sequence, 169 residues long: Cell division inhibitor SulA (169 aa).

Polar residues predominate over residues 1 to 16 (MFTSAHANRSPLTSAS). Residues 1 to 20 (MFTSAHANRSPLTSASVRRP) are disordered. Residues 106–112 (ALRTGNY) form a ftsZ binding region. A lon protease binding region spans residues 162–169 (KIHSNLYH).

Belongs to the SulA family. Interacts with FtsZ. In terms of processing, is rapidly cleaved and degraded by the Lon protease once DNA damage is repaired.

Functionally, component of the SOS system and an inhibitor of cell division. Accumulation of SulA causes rapid cessation of cell division and the appearance of long, non-septate filaments. In the presence of GTP, binds a polymerization-competent form of FtsZ in a 1:1 ratio, thus inhibiting FtsZ polymerization and therefore preventing it from participating in the assembly of the Z ring. This mechanism prevents the premature segregation of damaged DNA to daughter cells during cell division. This chain is Cell division inhibitor SulA, found in Klebsiella aerogenes (Enterobacter aerogenes).